The chain runs to 263 residues: 5'-nucleotidase SurE (263 aa).

4 residues coordinate a divalent metal cation: Asp-8, Asp-9, Ser-40, and Asn-93.

It belongs to the SurE nucleotidase family. A divalent metal cation is required as a cofactor.

The protein resides in the cytoplasm. The enzyme catalyses a ribonucleoside 5'-phosphate + H2O = a ribonucleoside + phosphate. Nucleotidase that shows phosphatase activity on nucleoside 5'-monophosphates. The protein is 5'-nucleotidase SurE of Beijerinckia indica subsp. indica (strain ATCC 9039 / DSM 1715 / NCIMB 8712).